We begin with the raw amino-acid sequence, 395 residues long: Altered inheritance of mitochondria protein 39, mitochondrial (395 aa).

The chain crosses the membrane as a helical span at residues Gln-156–Tyr-176.

The protein belongs to the AIM39 family.

The protein localises to the mitochondrion membrane. The sequence is that of Altered inheritance of mitochondria protein 39, mitochondrial (AIM39) from Saccharomyces cerevisiae (strain ATCC 204508 / S288c) (Baker's yeast).